The sequence spans 436 residues: FAD-dependent monooxygenase pigN (436 aa).

FAD contacts are provided by Glu-40, Gly-53, and Arg-118. Residue Arg-200 is part of the active site. FAD contacts are provided by Asp-316 and Ala-329.

This sequence belongs to the paxM FAD-dependent monooxygenase family. Requires FAD as cofactor.

It functions in the pathway secondary metabolite biosynthesis. In terms of biological role, FAD-dependent monooxygenase; part of the gene cluster that mediates the biosynthesis of azaphilone pigments (MonAzPs), a complex mixture of compounds with a common azaphilone skeleton very widely used as food colorants. Within the pathway, pigN hydroxylates the benzaldehyde M7PKS-1 intermediate at C-4 to form the pyran ring. The first step of the pathway is performed by the nrPKS pigA that forms the hexaketide precursor from successive condensations of five malonyl-CoA units, with a simple acetyl-CoA starter unit. The role of esterase pigG is not clear, but it may play at most a supplementary role in the formation of the benzaldehyde produced by the pigA nrPKS. This very reactive benzaldehyde is intercepted by the pigC ketoreductase that to provide the first stable enzyme-free MonAzPs intermediate, 6-(4-hydroxy-2-oxopentyl)-3-methyl-2,4-dioxocyclohexane carbaldehyde, also known as M7PKS-1. The FAD-dependent monooxygenase pigN hydroxylates M7PKS-1 at C-4, which triggers the formation of the pyran ring. PigJ, pigK and pigD are involved in the acetylation of the pyran ring. PigJ and pigK form the two subunits of a dedicated fungal FAS that produces the side chain fatty acyl moiety of MonAzPs and pigD transfers the fatty acyl chain to the C-4 alcohol. PigM and pigO are involved in the elimination of the omega-1 alcohol. PigM acts as an O-acetyltransferase that synthesizes the putative O-11 acetyl intermediate whereas pigO eliminates acetic acid to yield an intermediate with a C10(11) double bond. The dehydration of the C-11 alcohol followed by the reduction of the C6(7) double bond by the NAD(P)H-dependent oxidoreductase pigE increases the electrophilicity of the C-5 ketone of the resulting acyl benzopyran. This in turn sets up the C-5 ketone for an intramolecular Knoevenagel aldol condensation with the C-20 enol of the side chain. This condensation affords the characteristic linear tricyclic carbon skeletons of the yellow pigments that serve as the common precursors for the classical yellow pigments monascin and ankaflavin, orange pigments rubopunctatin and monascorubrin, and red pigments ribropunctamine and monascorubramine. The FAD-dependent oxidoreductase pigF is especially invoved in the biosynthesis of orange and red pigments via desaturation of C6(7). The protein is FAD-dependent monooxygenase pigN of Monascus ruber (Mold).